The sequence spans 86 residues: U15-lycotoxin-Ls1d (86 aa).

The signal sequence occupies residues 1–20 (MNSKIFAVLFLLAFLSCVLS). Residues 21–66 (DQYCPKSSITACKKMNIRNDCCKDDDCTGGSWCCATPCGNFCKYPT) enclose the WAP domain. Intrachain disulfides connect C24–C54, C32–C58, C41–C53, C42–C80, and C47–C62.

Belongs to the venom protein 11 family. 01 (wap-1) subfamily. Contains 5 disulfide bonds. As to expression, expressed by the venom gland.

It localises to the secreted. Functionally, has antibacterial activity. This is U15-lycotoxin-Ls1d from Lycosa singoriensis (Wolf spider).